A 123-amino-acid polypeptide reads, in one-letter code: PTS-dependent dihydroxyacetone kinase, phosphotransferase subunit DhaM (123 aa).

Residues 2-123 (TYGIVIVSHS…EQLEKMLIEK (122 aa)) enclose the PTS EIIA type-4 domain. His10 functions as the Tele-phosphohistidine intermediate; for EIIA activity in the catalytic mechanism.

In terms of assembly, homodimer. The dihydroxyacetone kinase complex is composed of a homodimer of DhaM, a homodimer of DhaK and the subunit DhaL.

The catalysed reaction is dihydroxyacetone + phosphoenolpyruvate = dihydroxyacetone phosphate + pyruvate. It participates in polyol metabolism; glycerol degradation. Its function is as follows. Component of the dihydroxyacetone kinase complex, which is responsible for the phosphoenolpyruvate (PEP)-dependent phosphorylation of dihydroxyacetone. DhaM serves as the phosphoryl donor. Is phosphorylated by phosphoenolpyruvate in an EI- and HPr-dependent reaction, and a phosphorelay system on histidine residues finally leads to phosphoryl transfer to DhaL and dihydroxyacetone. The protein is PTS-dependent dihydroxyacetone kinase, phosphotransferase subunit DhaM of Lactococcus lactis subsp. lactis (strain IL1403) (Streptococcus lactis).